The chain runs to 457 residues: Adenylosuccinate synthetase (457 aa).

Residues 40-46 (GDEGKGK) and 70-72 (GHT) contribute to the GTP site. The Proton acceptor role is filled by Asp41. Mg(2+)-binding residues include Asp41 and Gly70. IMP is bound by residues 41–44 (DEGK), 68–71 (NAGH), Thr161, Arg175, Asn255, Thr270, and Arg334. His71 (proton donor) is an active-site residue. 330-336 (VTTGRKR) contributes to the substrate binding site. Residues Arg336, 362–364 (KLD), and 444–446 (GVG) contribute to the GTP site.

This sequence belongs to the adenylosuccinate synthetase family. In terms of assembly, homodimer. Mg(2+) serves as cofactor.

The protein localises to the cytoplasm. It catalyses the reaction IMP + L-aspartate + GTP = N(6)-(1,2-dicarboxyethyl)-AMP + GDP + phosphate + 2 H(+). The protein operates within purine metabolism; AMP biosynthesis via de novo pathway; AMP from IMP: step 1/2. Plays an important role in the de novo pathway and in the salvage pathway of purine nucleotide biosynthesis. Catalyzes the first committed step in the biosynthesis of AMP from IMP. In Caenorhabditis elegans, this protein is Adenylosuccinate synthetase.